An 855-amino-acid chain; its full sequence is Pentatricopeptide repeat-containing protein At1g74750 (855 aa).

The segment at 21–40 (GSRPSAADGNSCTCAEDESG) is disordered. PPR repeat units follow at residues 358-392 (DGHT…GCKP), 393-427 (NTVT…GCEP), 428-462 (DRVT…GLSP), 463-497 (DTFT…GCTP), 498-532 (NLVT…GFQP), 533-567 (DKVT…NWVP), 568-602 (DEPV…GLRP), and 603-637 (NVPT…GLHP). The region spanning 755–838 (INLHVMSEGT…NSGCFVGSGE (84 aa)) is the Smr domain.

It belongs to the PPR family. P subfamily.

The protein is Pentatricopeptide repeat-containing protein At1g74750 of Arabidopsis thaliana (Mouse-ear cress).